Consider the following 143-residue polypeptide: Large ribosomal subunit protein uL22c (143 aa).

The protein belongs to the universal ribosomal protein uL22 family. As to quaternary structure, part of the 50S ribosomal subunit.

It localises to the plastid. It is found in the chloroplast. In terms of biological role, this protein binds specifically to 23S rRNA. The globular domain of the protein is located near the polypeptide exit tunnel on the outside of the subunit, while an extended beta-hairpin is found that lines the wall of the exit tunnel in the center of the 70S ribosome. The sequence is that of Large ribosomal subunit protein uL22c (rpl22) from Piper cenocladum (Ant piper).